Here is a 343-residue protein sequence, read N- to C-terminus: Isopentenyl-diphosphate delta-isomerase (343 aa).

6-7 (RK) provides a ligand contact to substrate. Residues Ser63, 64–66 (SMT), Ser94, and Asn122 contribute to the FMN site. A substrate-binding site is contributed by 94 to 96 (SMR). Gln157 is a binding site for substrate. Glu158 is a binding site for Mg(2+). FMN is bound by residues Lys189, Thr219, 269–271 (GLK), and 290–291 (AG).

The protein belongs to the IPP isomerase type 2 family. Homooctamer. Dimer of tetramers. FMN serves as cofactor. The cofactor is NADPH. Mg(2+) is required as a cofactor.

It is found in the cytoplasm. The catalysed reaction is isopentenyl diphosphate = dimethylallyl diphosphate. Functionally, involved in the biosynthesis of isoprenoids. Catalyzes the 1,3-allylic rearrangement of the homoallylic substrate isopentenyl (IPP) to its allylic isomer, dimethylallyl diphosphate (DMAPP). This Rickettsia bellii (strain OSU 85-389) protein is Isopentenyl-diphosphate delta-isomerase.